Reading from the N-terminus, the 375-residue chain is RNA exonuclease 4 (375 aa).

Residues 21–78 (KTLGSDASSSSASSSTNNRRKLSTSESTKPKRTRLDAKEKDAEGSKSCSPAPTSLPWF) form a disordered region. Over residues 25–35 (SDASSSSASSS) the composition is skewed to low complexity. Residues 53–64 (TRLDAKEKDAEG) are compositionally biased toward basic and acidic residues. In terms of domain architecture, Exonuclease spans 134 to 297 (NYLAIDCEMV…FRSQKPKWDE (164 aa)).

Belongs to the REXO4 family.

Its subcellular location is the nucleus. Functionally, exoribonuclease involved in ribosome biosynthesis. Involved in the processing of ITS1, the internal transcribed spacer localized between the 18S and 5.8S rRNAs. This is RNA exonuclease 4 (REX4) from Mycosarcoma maydis (Corn smut fungus).